The chain runs to 142 residues: Protein CPn_0742/CP_0003/CPj0742/CpB0770 (142 aa).

The tract at residues 115-142 is disordered; it reads LHPTKESKRPKQKLSSTKKNKKKNWIPL. Positions 124–142 are enriched in basic residues; sequence PKQKLSSTKKNKKKNWIPL.

This sequence belongs to the chlamydial CPn_0742/CT_635/TC_0003 family.

The protein is Protein CPn_0742/CP_0003/CPj0742/CpB0770 of Chlamydia pneumoniae (Chlamydophila pneumoniae).